Reading from the N-terminus, the 337-residue chain is MPHPLLDFAPEVRSALDAGAPVVALESTIVTHGMPHPQNVETARAVAAVVRANGAVPAIVAVVAGRIRIGLPEEILDWLGTAKEVLKLSRADLPHAVAAGLHGSTTVAATMICAHRAGIRVFATGGIGGVHRGVEETLDISADLDELARTPVAVVCAGAKAILDLPRTLEYLETRGVPVVGYRTDRFPAFWSRDSGLPAPLRLDTPEAIAALMRTKEALDLGGGILVANPVPEADEIPAREIAALIATAVAQARAAGIAGKAVTPFLLSRLLDLTGGRSLSTNIALVKNNAALAAQLAVALRGARSSGPQAGAGAPGAEPGPARRTSPARAPSGEGW.

The active-site Proton donor is the Glu-26. Substrate is bound by residues Lys-87 and Val-107. Residue Asp-139 participates in Mn(2+) binding. Ser-141–Asp-143 lines the substrate pocket. Lys-160 (nucleophile) is an active-site residue. The segment covering Ser-306–Arg-325 has biased composition (low complexity). A disordered region spans residues Ser-306–Trp-337.

Belongs to the pseudouridine-5'-phosphate glycosidase family. As to quaternary structure, homotrimer. Requires Mn(2+) as cofactor.

The catalysed reaction is D-ribose 5-phosphate + uracil = psi-UMP + H2O. Functionally, catalyzes the reversible cleavage of pseudouridine 5'-phosphate (PsiMP) to ribose 5-phosphate and uracil. Functions biologically in the cleavage direction, as part of a pseudouridine degradation pathway. This is Pseudouridine-5'-phosphate glycosidase from Methylobacterium nodulans (strain LMG 21967 / CNCM I-2342 / ORS 2060).